Here is a 336-residue protein sequence, read N- to C-terminus: Dihydroorotate dehydrogenase (quinone) (336 aa).

Residues 62-66 and threonine 86 contribute to the FMN site; that span reads AGLDK. Substrate is bound at residue lysine 66. 111–115 serves as a coordination point for substrate; sequence NRMGF. FMN is bound by residues asparagine 139 and asparagine 172. Asparagine 172 is a binding site for substrate. The Nucleophile role is filled by serine 175. Substrate is bound at residue asparagine 177. Positions 217 and 245 each coordinate FMN. 246 to 247 provides a ligand contact to substrate; that stretch reads NT. Residues glycine 268, glycine 297, and 318-319 each bind FMN; that span reads YS.

It belongs to the dihydroorotate dehydrogenase family. Type 2 subfamily. As to quaternary structure, monomer. It depends on FMN as a cofactor.

The protein localises to the cell membrane. The catalysed reaction is (S)-dihydroorotate + a quinone = orotate + a quinol. Its pathway is pyrimidine metabolism; UMP biosynthesis via de novo pathway; orotate from (S)-dihydroorotate (quinone route): step 1/1. In terms of biological role, catalyzes the conversion of dihydroorotate to orotate with quinone as electron acceptor. This is Dihydroorotate dehydrogenase (quinone) from Yersinia enterocolitica serotype O:8 / biotype 1B (strain NCTC 13174 / 8081).